The following is a 393-amino-acid chain: Acetyl-CoA acetyltransferase (393 aa).

Cysteine 90 (acyl-thioester intermediate) is an active-site residue. Active-site proton acceptor residues include histidine 349 and cysteine 379.

This sequence belongs to the thiolase-like superfamily. Thiolase family. Homotetramer.

The protein resides in the cytoplasm. The catalysed reaction is 2 acetyl-CoA = acetoacetyl-CoA + CoA. Its pathway is biopolymer metabolism; poly-(R)-3-hydroxybutanoate biosynthesis. It participates in metabolic intermediate biosynthesis; (R)-mevalonate biosynthesis; (R)-mevalonate from acetyl-CoA: step 1/3. This Rhizobium meliloti (strain 1021) (Ensifer meliloti) protein is Acetyl-CoA acetyltransferase.